A 354-amino-acid polypeptide reads, in one-letter code: Ribosomal RNA large subunit methyltransferase M (354 aa).

S-adenosyl-L-methionine-binding positions include S183, 216 to 219, D235, D255, and D271; that span reads SPGG. K300 serves as the catalytic Proton acceptor.

It belongs to the class I-like SAM-binding methyltransferase superfamily. RNA methyltransferase RlmE family. RlmM subfamily. As to quaternary structure, monomer.

The protein resides in the cytoplasm. The catalysed reaction is cytidine(2498) in 23S rRNA + S-adenosyl-L-methionine = 2'-O-methylcytidine(2498) in 23S rRNA + S-adenosyl-L-homocysteine + H(+). In terms of biological role, catalyzes the 2'-O-methylation at nucleotide C2498 in 23S rRNA. The sequence is that of Ribosomal RNA large subunit methyltransferase M from Pseudomonas putida (strain GB-1).